Consider the following 372-residue polypeptide: D-alanine--D-alanine ligase (372 aa).

In terms of domain architecture, ATP-grasp spans K145–E349. D176 to E231 lines the ATP pocket. The Mg(2+) site is built by D303, E316, and N318.

The protein belongs to the D-alanine--D-alanine ligase family. Mg(2+) is required as a cofactor. It depends on Mn(2+) as a cofactor.

The protein resides in the cytoplasm. It carries out the reaction 2 D-alanine + ATP = D-alanyl-D-alanine + ADP + phosphate + H(+). It functions in the pathway cell wall biogenesis; peptidoglycan biosynthesis. Cell wall formation. The polypeptide is D-alanine--D-alanine ligase (Coxiella burnetii (strain RSA 331 / Henzerling II)).